A 97-amino-acid polypeptide reads, in one-letter code: Eotaxin (97 aa).

The first 23 residues, 1-23 (MQSSTALLFLLLTVTSFTSQVLA), serve as a signal peptide directing secretion. Cystine bridges form between Cys32–Cys57 and Cys33–Cys73. Thr94 carries an O-linked (GalNAc...) threonine glycan.

This sequence belongs to the intercrine beta (chemokine CC) family. Expressed constitutively in the thymus. Expression inducible in the lung (type I alveolar epithelial cells), intestine, heart, spleen, kidney.

It localises to the secreted. Functionally, in response to the presence of allergens, this protein directly promotes the accumulation of eosinophils (a prominent feature of allergic inflammatory reactions), but not lymphocytes, macrophages or neutrophils. Binds to CCR3. This is Eotaxin (Ccl11) from Mus musculus (Mouse).